Here is a 251-residue protein sequence, read N- to C-terminus: Imidazole glycerol phosphate synthase subunit HisF (251 aa).

Active-site residues include aspartate 11 and aspartate 130.

This sequence belongs to the HisA/HisF family. Heterodimer of HisH and HisF.

It is found in the cytoplasm. It carries out the reaction 5-[(5-phospho-1-deoxy-D-ribulos-1-ylimino)methylamino]-1-(5-phospho-beta-D-ribosyl)imidazole-4-carboxamide + L-glutamine = D-erythro-1-(imidazol-4-yl)glycerol 3-phosphate + 5-amino-1-(5-phospho-beta-D-ribosyl)imidazole-4-carboxamide + L-glutamate + H(+). The protein operates within amino-acid biosynthesis; L-histidine biosynthesis; L-histidine from 5-phospho-alpha-D-ribose 1-diphosphate: step 5/9. Functionally, IGPS catalyzes the conversion of PRFAR and glutamine to IGP, AICAR and glutamate. The HisF subunit catalyzes the cyclization activity that produces IGP and AICAR from PRFAR using the ammonia provided by the HisH subunit. The polypeptide is Imidazole glycerol phosphate synthase subunit HisF (Cytophaga hutchinsonii (strain ATCC 33406 / DSM 1761 / CIP 103989 / NBRC 15051 / NCIMB 9469 / D465)).